Consider the following 473-residue polypeptide: Photosystem II CP43 reaction center protein (473 aa).

Residues 1 to 14 (MKILYSLRRFYHVE) constitute a propeptide that is removed on maturation. Thr15 carries the N-acetylthreonine modification. Thr15 carries the post-translational modification Phosphothreonine. 5 consecutive transmembrane segments (helical) span residues 69 to 93 (LFEV…PHLA), 134 to 155 (LLGP…KDRN), 178 to 200 (KALY…RKIT), 255 to 275 (KPFA…LSYS), and 291 to 312 (WFNN…ASQA). A [CaMn4O5] cluster-binding site is contributed by Glu367. The chain crosses the membrane as a helical span at residues 447-471 (RARAAAAGFEKGIDRDLEPVLYMNP).

It belongs to the PsbB/PsbC family. PsbC subfamily. In terms of assembly, PSII is composed of 1 copy each of membrane proteins PsbA, PsbB, PsbC, PsbD, PsbE, PsbF, PsbH, PsbI, PsbJ, PsbK, PsbL, PsbM, PsbT, PsbX, PsbY, PsbZ, Psb30/Ycf12, at least 3 peripheral proteins of the oxygen-evolving complex and a large number of cofactors. It forms dimeric complexes. Requires Binds multiple chlorophylls and provides some of the ligands for the Ca-4Mn-5O cluster of the oxygen-evolving complex. It may also provide a ligand for a Cl- that is required for oxygen evolution. PSII binds additional chlorophylls, carotenoids and specific lipids. as cofactor.

It localises to the plastid. The protein localises to the chloroplast thylakoid membrane. One of the components of the core complex of photosystem II (PSII). It binds chlorophyll and helps catalyze the primary light-induced photochemical processes of PSII. PSII is a light-driven water:plastoquinone oxidoreductase, using light energy to abstract electrons from H(2)O, generating O(2) and a proton gradient subsequently used for ATP formation. This is Photosystem II CP43 reaction center protein from Lolium perenne (Perennial ryegrass).